Here is a 74-residue protein sequence, read N- to C-terminus: MEKAEKYVKIGIDGYTYNLFKSEKDKWRKKTGRVLDNSDILLILVQRSRALECLENDKSKTVEECKKETALQNY.

This is an uncharacterized protein from Acidianus hospitalis (AFV-1).